A 568-amino-acid chain; its full sequence is MAGUK p55 subfamily member 3 (568 aa).

L27 domains are found at residues Glu6–Ser60 and Pro61–Val118. In terms of domain architecture, PDZ spans Ile137–Thr218. Residues Asp226–Leu296 form the SH3 domain. A Phosphoserine modification is found at Ser307. In terms of domain architecture, Guanylate kinase-like spans Pro385 to Ser568.

It belongs to the MAGUK family. In terms of assembly, interacts with HTR2C; this interaction stabilizes the receptor at the plasma membrane and prevents the desensitization of the HTR2C receptor-mediated calcium response. Interacts with HTR2A. Interacts with HTR4. Interacts (via PDZ domain) with CADM1 (via C-terminus)Interacts (via PDZ domain) with CADM1; this interaction connects CADM1 with DLG1. Interacts (via Guanylate kinase-like domain) with PALS1. Interacts with DLG1 (via N-terminus); this interaction connects CADM1 with DLG1 and links CADM1 with the regulatory subunit of phosphoinositide-3-kinase (PI3K) by forming a multiprotein complex and participates in cell spreading. In terms of tissue distribution, expressed in brain, skeletal muscle, testis, kidney, and lung.

Its subcellular location is the apical cell membrane. The protein localises to the cell membrane. The protein resides in the cell junction. It is found in the adherens junction. Functionally, participates in cell spreading through the phosphoinositide-3-kinase (PI3K) pathway by connecting CADM1 to DLG1 and the regulatory subunit of phosphoinositide-3-kinase (PI3K). Stabilizes HTR2C at the plasma membrane and prevents its desensitization. May participates in the maintenance of adherens junctions. The sequence is that of MAGUK p55 subfamily member 3 from Mus musculus (Mouse).